Here is a 165-residue protein sequence, read N- to C-terminus: Large ribosomal subunit protein uL10 (165 aa).

It belongs to the universal ribosomal protein uL10 family. In terms of assembly, part of the ribosomal stalk of the 50S ribosomal subunit. The N-terminus interacts with L11 and the large rRNA to form the base of the stalk. The C-terminus forms an elongated spine to which L12 dimers bind in a sequential fashion forming a multimeric L10(L12)X complex.

Forms part of the ribosomal stalk, playing a central role in the interaction of the ribosome with GTP-bound translation factors. In Burkholderia thailandensis (strain ATCC 700388 / DSM 13276 / CCUG 48851 / CIP 106301 / E264), this protein is Large ribosomal subunit protein uL10.